Reading from the N-terminus, the 548-residue chain is MFS-rype transporter paaT (548 aa).

The segment covering 1–10 (MEAPRSDQAH) has biased composition (basic and acidic residues). Residues 1–32 (MEAPRSDQAHTDATTPMEAIRTTSLGTNNYGP) form a disordered region. The segment covering 21–30 (RTTSLGTNNY) has biased composition (polar residues). N70 and N93 each carry an N-linked (GlcNAc...) asparagine glycan. A run of 12 helical transmembrane segments spans residues 100-120 (WYCT…SSVI), 139-159 (LVVI…FAPM), 174-194 (ALAV…TLIV), 197-217 (LIDG…LADL), 224-244 (GVPM…GPLV), 256-276 (WLYW…TFTV), 332-352 (IVLF…MFFV), 370-390 (GLMF…APFV), 411-431 (LIPM…FAWT), 436-456 (LHWM…ILLY), 471-493 (AASA…VLFT), and 505-525 (ASTL…VFYF). Positions 258 to 269 (YWIQLILAFVAW) match the Peroxisomal targeting signal motif.

It belongs to the major facilitator superfamily. DHA1 family. Polyamines/proton antiporter (TC 2.A.1.2.16) subfamily.

The protein resides in the peroxisome membrane. Its function is as follows. MFS-type transporter involved in penicillin production, most likely through the translocation of side-chain precursors (phenylacetic acid and phenoxyacetic acid) from the cytosol to the peroxisomal lumen across the peroxisomal membrane. In Penicillium rubens (strain ATCC 28089 / DSM 1075 / NRRL 1951 / Wisconsin 54-1255) (Penicillium chrysogenum), this protein is MFS-rype transporter paaT.